A 360-amino-acid polypeptide reads, in one-letter code: Dihydroorotate dehydrogenase (quinone) (360 aa).

Residues 66-70 (AGFDK) and threonine 90 each bind FMN. Residue lysine 70 participates in substrate binding. A substrate-binding site is contributed by 115-119 (NRMGF). Residues asparagine 143 and asparagine 176 each coordinate FMN. Position 176 (asparagine 176) interacts with substrate. Residue serine 179 is the Nucleophile of the active site. Asparagine 181 is a binding site for substrate. 2 residues coordinate FMN: lysine 212 and threonine 240. 241–242 (NT) contributes to the substrate binding site. Residues glycine 264, glycine 293, and 314–315 (YT) contribute to the FMN site.

It belongs to the dihydroorotate dehydrogenase family. Type 2 subfamily. Monomer. FMN serves as cofactor.

The protein localises to the cell membrane. It catalyses the reaction (S)-dihydroorotate + a quinone = orotate + a quinol. The protein operates within pyrimidine metabolism; UMP biosynthesis via de novo pathway; orotate from (S)-dihydroorotate (quinone route): step 1/1. In terms of biological role, catalyzes the conversion of dihydroorotate to orotate with quinone as electron acceptor. The protein is Dihydroorotate dehydrogenase (quinone) of Mycobacterium ulcerans (strain Agy99).